The following is a 290-amino-acid chain: Alpha-1,2-colitosyltransferase (290 aa).

Belongs to the glycosyltransferase 11 family. Does not require a metal cofactor. is required as a cofactor.

It catalyses the reaction GDP-beta-L-colitose + beta-D-galactosyl-(1-&gt;3)-N-acetyl-D-glucosamine = alpha-L-colitosyl-(1-&gt;2)-beta-D-galactosyl-(1-&gt;3)-N-acetyl-D-glucosamine + GDP + H(+). The protein operates within bacterial outer membrane biogenesis; LPS O-antigen biosynthesis. Addition of metal ions dramatically decreases the activity to 0-40%. In terms of biological role, involved in the biosynthesis of the lipopolysaccharide (LPS) O-antigen region. Catalyzes the transfer of colitose from GDP-colitose to the galactose residue of beta-Gal-(1-&gt;3)-GlcNAc (lacto-N-biose) via an alpha1,2-linkage. Is specific for beta-Gal-(1-&gt;3)-GlcNAc, but can use GDP-L-fucose as the sugar donor with almost the same efficiency as GDP-L-colitose. The polypeptide is Alpha-1,2-colitosyltransferase (Escherichia coli).